Reading from the N-terminus, the 340-residue chain is Ferrochelatase (340 aa).

Positions 202 and 283 each coordinate Fe cation.

The protein belongs to the ferrochelatase family.

The protein resides in the cytoplasm. The catalysed reaction is heme b + 2 H(+) = protoporphyrin IX + Fe(2+). The protein operates within porphyrin-containing compound metabolism; protoheme biosynthesis; protoheme from protoporphyrin-IX: step 1/1. In terms of biological role, catalyzes the ferrous insertion into protoporphyrin IX. The sequence is that of Ferrochelatase from Acinetobacter baylyi (strain ATCC 33305 / BD413 / ADP1).